A 292-amino-acid chain; its full sequence is Xyloglucan endotransglucosylase/hydrolase protein A (292 aa).

The signal sequence occupies residues 1-20 (MGSSLWTCLILLSLASASFA). The region spanning 21–219 (ANPRTPIDVP…WSKAPFIASY (199 aa)) is the GH16 domain. Glu105 (nucleophile) is an active-site residue. Glu109 serves as the catalytic Proton donor. Glu109 provides a ligand contact to xyloglucan. N-linked (GlcNAc...) asparagine glycosylation occurs at Asn113. Residues 122–124 (QTN), 132–134 (DRE), 198–199 (DW), and Gly203 contribute to the xyloglucan site. 2 disulfide bridges follow: Cys227-Cys236 and Cys273-Cys286. A xyloglucan-binding site is contributed by Arg278.

This sequence belongs to the glycosyl hydrolase 16 family. XTH group 1 subfamily. Contains at least one intrachain disulfide bond essential for its enzymatic activity. In terms of tissue distribution, predominantly expressed in the phloem fibers of growing internodes. Expressed in xylem cells in the basal part of the internode. In the internode, it is expressed closer to the top of the internode compared to XTHB.

The protein resides in the secreted. It is found in the cell wall. It localises to the extracellular space. Its subcellular location is the apoplast. The catalysed reaction is breaks a beta-(1-&gt;4) bond in the backbone of a xyloglucan and transfers the xyloglucanyl segment on to O-4 of the non-reducing terminal glucose residue of an acceptor, which can be a xyloglucan or an oligosaccharide of xyloglucan.. Functionally, catalyzes xyloglucan endohydrolysis (XEH) and/or endotransglycosylation (XET). Cleaves and religates xyloglucan polymers, an essential constituent of the primary cell wall, and thereby participates in cell wall construction of growing tissues. The sequence is that of Xyloglucan endotransglucosylase/hydrolase protein A (XTHA) from Phaseolus angularis (Azuki bean).